Reading from the N-terminus, the 484-residue chain is Zinc metalloproteinase-disintegrin jerdonitin (484 aa).

Residues 1–20 (MIQVLLVTICLAVFPYQGSS) form the signal peptide. The propeptide occupies 21-191 (IILESGNIDD…KLSQIMIPPE (171 aa)). Gln-192 bears the Pyrrolidone carboxylic acid mark. The Peptidase M12B domain occupies 194-392 (RYIELVIVAD…FTSRCLYNEP (199 aa)). Ca(2+) is bound by residues Glu-197 and Asp-281. 3 disulfides stabilise this stretch: Cys-305-Cys-387, Cys-345-Cys-369, and Cys-347-Cys-352. His-330 provides a ligand contact to Zn(2+). Glu-331 is an active-site residue. His-334 and His-340 together coordinate Zn(2+). Residues Cys-387, Asn-390, Val-402, Asn-405, Glu-409, Glu-412, and Asp-415 each coordinate Ca(2+). The 85-residue stretch at 400 to 484 (PSVCGNYYME…AGCPRNPFHA (85 aa)) folds into the Disintegrin domain. 7 cysteine pairs are disulfide-bonded: Cys-403-Cys-422, Cys-414-Cys-432, Cys-416-Cys-427, Cys-426-Cys-449, Cys-440-Cys-446, Cys-445-Cys-470, and Cys-458-Cys-477. A Cell attachment site motif is present at residues 462–464 (RGD).

Belongs to the venom metalloproteinase (M12B) family. P-II subfamily. P-IIb sub-subfamily. In terms of assembly, monomer. Zn(2+) is required as a cofactor. Post-translationally, the N-terminus is blocked. In terms of tissue distribution, expressed by the venom gland.

The protein localises to the secreted. With respect to regulation, fibrinogenolytic activity is completely inhibited by EDTA, but not by PMSF. In terms of biological role, snake venom zinc metalloproteinase that inhibits ADP-induced human platelet aggregation (IC(50)=120 nM (native) and IC(50)=248 nM (recombinant)). May act by binding to the receptor GPIIb/GPIIIa (ITGA2B/ITGB3) on the platelet surface. Degrades the alpha-chain of fibrinogen completely and the beta-chain partially, leaving the gamma chain intact. Also inhibits the growth of several cell lines, including human liver cancer cells (Bel7402), human leukemia cells (K562) and human gastric carcinoma cells (BGC823). The sequence is that of Zinc metalloproteinase-disintegrin jerdonitin from Protobothrops jerdonii (Jerdon's pitviper).